We begin with the raw amino-acid sequence, 388 residues long: MASLLGAYPWPEGLECPALDAELSDGQSPPAVPRPPGDKGSESRIRRPMNAFMVWAKDERKRLAVQNPDLHNAELSKMLGKSWKALTLSQKRPYVDEAERLRLQHMQDYPNYKYRPRRKKQAKRLCKRVDPGFLLSSLSRDQNALPEKRSGSRGALGEKEDRGEYSPGTALPSLRGCYHEGPAGGGGGGTPSSVDTYPYGLPTPPEMSPLDVLEPEQTFFSSPCQEEHGHPRRIPHLPGHPYSPEYAPSPLHCSHPLGSLALGQSPGVSMMSPVPGCPPSPAYYSPATYHPLHSNLQAHLGQLSPPPEHPGFDALDQLSQVELLGDMDRNEFDQYLNTPGHPDSATGAMALSGHVPVSQVTPTGPTETSLISVLADATATYYNSYSVS.

2 disordered regions span residues 20 to 46 (DAEL…SRIR) and 140 to 197 (RDQN…VDTY). Composition is skewed to basic and acidic residues over residues 36–45 (PGDKGSESRI) and 146–164 (PEKR…DRGE). Residues 45–113 (IRRPMNAFMV…QHMQDYPNYK (69 aa)) constitute a DNA-binding region (HMG box). A Sox C-terminal domain is found at 268–388 (VSMMSPVPGC…ATYYNSYSVS (121 aa)).

Interacts with CTNNB1/beta-catenin; this interaction may lead to the proteasomal degradation of active CTNNB1 and thus inhibition of Wnt/beta-catenin-stimulated transcription. As to expression, widely expressed in adult and fetal tissues. Present both in mesenchymal and epithelial cells in some adult tissues, including colon. Tends to be down-regulated in prostate adenocarcinomas and colorectal tumors due to promoter hypermethylation.

Its subcellular location is the nucleus. The protein localises to the cytoplasm. Functionally, binds to and activates the CDH5 promoter, hence plays a role in the transcriptional regulation of genes expressed in the hemogenic endothelium and blocks further differentiation into blood precursors. May be required for the survival of both hematopoietic and endothelial precursors during specification. Competes with GATA4 for binding and activation of the FGF3 promoter. Represses Wnt/beta-catenin-stimulated transcription, probably by targeting CTNNB1 to proteasomal degradation. Binds the DNA sequence 5'-AACAAT-3'. This chain is Transcription factor SOX-7 (SOX7), found in Homo sapiens (Human).